A 356-amino-acid chain; its full sequence is MRVTDFSFELPESLIAHYPMPERSSCRLLSLDGPTGALTHGTFTDLLDKLNPGDLLVFNNTRVIPARLFGRKASGGKIEVLVERMLDDKRILAHIRASKAPKPGAELLLGDDESINATMTARHGALFEVEFNDDRSVLDILNSIGHMPLPPYIDRPDEDADRELYQTVYSEKPGAVAAPTAGLHFDEPLLEKLRAKGVEMAFVTLHVGAGTFQPVRVDTIEDHIMHSEYAEVPQDVVDAVLATKARGNRVIAVGTTSVRSLESAAQAAKNDLIEPFFDDTQIFIYPGFQYKVVDALVTNFHLPESTLIMLVSAFAGYQHTMNAYKAAVEEKYRFFSYGDAMFITYNPQAINERVGE.

It belongs to the QueA family. As to quaternary structure, monomer.

The protein localises to the cytoplasm. The catalysed reaction is 7-aminomethyl-7-carbaguanosine(34) in tRNA + S-adenosyl-L-methionine = epoxyqueuosine(34) in tRNA + adenine + L-methionine + 2 H(+). Its pathway is tRNA modification; tRNA-queuosine biosynthesis. In terms of biological role, transfers and isomerizes the ribose moiety from AdoMet to the 7-aminomethyl group of 7-deazaguanine (preQ1-tRNA) to give epoxyqueuosine (oQ-tRNA). The chain is S-adenosylmethionine:tRNA ribosyltransferase-isomerase from Escherichia fergusonii (strain ATCC 35469 / DSM 13698 / CCUG 18766 / IAM 14443 / JCM 21226 / LMG 7866 / NBRC 102419 / NCTC 12128 / CDC 0568-73).